The following is a 188-amino-acid chain: Protein GrpE (188 aa).

Positions 1 to 24 are disordered; that stretch reads MSDENKPGEAAELDAGVAPEAQPE.

This sequence belongs to the GrpE family. As to quaternary structure, homodimer.

It localises to the cytoplasm. Participates actively in the response to hyperosmotic and heat shock by preventing the aggregation of stress-denatured proteins, in association with DnaK and GrpE. It is the nucleotide exchange factor for DnaK and may function as a thermosensor. Unfolded proteins bind initially to DnaJ; upon interaction with the DnaJ-bound protein, DnaK hydrolyzes its bound ATP, resulting in the formation of a stable complex. GrpE releases ADP from DnaK; ATP binding to DnaK triggers the release of the substrate protein, thus completing the reaction cycle. Several rounds of ATP-dependent interactions between DnaJ, DnaK and GrpE are required for fully efficient folding. The protein is Protein GrpE of Hyphomonas neptunium (strain ATCC 15444).